A 914-amino-acid chain; its full sequence is Protein translocase subunit SecA (914 aa).

Residues Gln86, 104 to 108 (GEGKT), and Asp512 contribute to the ATP site. Zn(2+) is bound by residues Cys898, Cys900, Cys909, and His910.

It belongs to the SecA family. Monomer and homodimer. Part of the essential Sec protein translocation apparatus which comprises SecA, SecYEG and auxiliary proteins SecDF-YajC and YidC. Requires Zn(2+) as cofactor.

It localises to the cell inner membrane. The protein localises to the cytoplasm. It catalyses the reaction ATP + H2O + cellular proteinSide 1 = ADP + phosphate + cellular proteinSide 2.. Part of the Sec protein translocase complex. Interacts with the SecYEG preprotein conducting channel. Has a central role in coupling the hydrolysis of ATP to the transfer of proteins into and across the cell membrane, serving both as a receptor for the preprotein-SecB complex and as an ATP-driven molecular motor driving the stepwise translocation of polypeptide chains across the membrane. The sequence is that of Protein translocase subunit SecA from Bordetella petrii (strain ATCC BAA-461 / DSM 12804 / CCUG 43448).